Reading from the N-terminus, the 401-residue chain is Nodal homolog 3-B (401 aa).

The first 18 residues, 1–18 (MALLNLFFCLVFSSPLMA), serve as a signal peptide directing secretion. The propeptide occupies 19–274 (MPPVLQGRKS…KVNGFRRLRR (256 aa)). N-linked (GlcNAc...) asparagine glycosylation is found at asparagine 168, asparagine 337, asparagine 341, and asparagine 344. 2 disulfide bridges follow: cysteine 299-cysteine 365 and cysteine 328-cysteine 396.

The protein belongs to the TGF-beta family. In terms of assembly, monomer. The propeptide region interacts with bmp4 in a non-covalent manner. Expressed in the dorsal marginal region of late blastula, becoming restricted to the dorsal blastopore lip (Spemann organizer) at the early gastrula stage.

The protein localises to the secreted. In terms of biological role, exhibits mesoderm-dorsalizing activity and neural-inducing activity, but lacks mesoderm-inducing activity. Regulates the expression of specific mesodermal and neural genes. Induces convergent extension movements at the embryonic midline by activating the fgf signaling pathway to induce t/bra expression in the organizer region. Acts with wnt11 to induce Spemann organizer cells and induce axis formation. The unprocessed protein antagonizes bmp-signaling. This is Nodal homolog 3-B (nodal3-b) from Xenopus laevis (African clawed frog).